Reading from the N-terminus, the 537-residue chain is Phosphoenolpyruvate carboxykinase (ATP) (537 aa).

3 residues coordinate substrate: Arg-61, Tyr-195, and Lys-201. Residues Lys-201, His-220, and 236 to 244 (GLSGTGKTT) contribute to the ATP site. The Mn(2+) site is built by Lys-201 and His-220. Asp-257 contacts Mn(2+). Glu-285, Arg-323, and Thr-448 together coordinate ATP. Arg-323 contacts substrate.

Belongs to the phosphoenolpyruvate carboxykinase (ATP) family. Mn(2+) is required as a cofactor.

It is found in the cytoplasm. It carries out the reaction oxaloacetate + ATP = phosphoenolpyruvate + ADP + CO2. The protein operates within carbohydrate biosynthesis; gluconeogenesis. Functionally, involved in the gluconeogenesis. Catalyzes the conversion of oxaloacetate (OAA) to phosphoenolpyruvate (PEP) through direct phosphoryl transfer between the nucleoside triphosphate and OAA. The sequence is that of Phosphoenolpyruvate carboxykinase (ATP) from Rhodopseudomonas palustris (strain ATCC BAA-98 / CGA009).